We begin with the raw amino-acid sequence, 227 residues long: Lysosomal-associated transmembrane protein 4B (227 aa).

4 consecutive transmembrane segments (helical) span residues I26–A46, M72–G92, W100–I120, and C153–I173. Positions P205–P222 are required for NEDD4 interaction.

Belongs to the LAPTM4/LAPTM5 transporter family. Homooligomer; upon reaching the lysosomes. Interacts with MCOLN1. Interacts with NEDD4; may play a role in the lysosomal sorting of LAPTM4B; enhances HGS association with NEDD4; mediates inhibition of EGFR degradation. Interacts with PIP5K1C; promotes SNX5 association with LAPTM4B; kinase activity of PIP5K1C is required; interaction is regulated by phosphatidylinositol 4,5-bisphosphate generated by PIP5K1C. Interacts with HGS; promotes HGS ubiquitination. Interacts with SNX5. Interacts with SLC3A2 and SLC7A5; recruits SLC3A2 and SLC7A5 to lysosomes to promote leucine uptake into these organelles and is required for mTORC1 activation. Interacts with LRRC32; decreases TGFB1 production in regulatory T cells. Interacts with BECN1; competes with EGFR for LAPTM4B binding; regulates EGFR activity. Interacts with EGFR; positively correlates with EGFR activation. Post-translationally, undergoes proteolytic cleavage following delivery to the lysosomes. In terms of processing, ubiquitinated by NEDD4.

The protein resides in the endomembrane system. It localises to the late endosome membrane. It is found in the cell membrane. The protein localises to the cell projection. Its subcellular location is the lysosome membrane. The protein resides in the endosome membrane. It localises to the endosome. It is found in the multivesicular body membrane. The protein localises to the multivesicular body lumen. In terms of biological role, required for optimal lysosomal function. Blocks EGF-stimulated EGFR intraluminal sorting and degradation. Conversely by binding with the phosphatidylinositol 4,5-bisphosphate, regulates its PIP5K1C interaction, inhibits HGS ubiquitination and relieves LAPTM4B inhibition of EGFR degradation. Recruits SLC3A2 and SLC7A5 (the Leu transporter) to the lysosome, promoting entry of leucine and other essential amino acid (EAA) into the lysosome, stimulating activation of proton-transporting vacuolar (V)-ATPase protein pump (V-ATPase) and hence mTORC1 activation. Plays a role as negative regulator of TGFB1 production in regulatory T cells. Binds ceramide and facilitates its exit from late endosome in order to control cell death pathways. The sequence is that of Lysosomal-associated transmembrane protein 4B from Rattus norvegicus (Rat).